Consider the following 94-residue polypeptide: Pyrimidine/purine nucleoside phosphorylase (94 aa).

Belongs to the nucleoside phosphorylase PpnP family.

It catalyses the reaction a purine D-ribonucleoside + phosphate = a purine nucleobase + alpha-D-ribose 1-phosphate. It carries out the reaction adenosine + phosphate = alpha-D-ribose 1-phosphate + adenine. The catalysed reaction is cytidine + phosphate = cytosine + alpha-D-ribose 1-phosphate. The enzyme catalyses guanosine + phosphate = alpha-D-ribose 1-phosphate + guanine. It catalyses the reaction inosine + phosphate = alpha-D-ribose 1-phosphate + hypoxanthine. It carries out the reaction thymidine + phosphate = 2-deoxy-alpha-D-ribose 1-phosphate + thymine. The catalysed reaction is uridine + phosphate = alpha-D-ribose 1-phosphate + uracil. The enzyme catalyses xanthosine + phosphate = alpha-D-ribose 1-phosphate + xanthine. Its function is as follows. Catalyzes the phosphorolysis of diverse nucleosides, yielding D-ribose 1-phosphate and the respective free bases. Can use uridine, adenosine, guanosine, cytidine, thymidine, inosine and xanthosine as substrates. Also catalyzes the reverse reactions. This chain is Pyrimidine/purine nucleoside phosphorylase, found in Escherichia fergusonii (strain ATCC 35469 / DSM 13698 / CCUG 18766 / IAM 14443 / JCM 21226 / LMG 7866 / NBRC 102419 / NCTC 12128 / CDC 0568-73).